A 987-amino-acid chain; its full sequence is VPS35 endosomal protein sorting factor-like (987 aa).

Low complexity predominate over residues 1 to 23 (MAERQSASSPTPSSPPQQQQQTP). The tract at residues 1–115 (MAERQSASSP…DPLNNPLEKK (115 aa)) is disordered. A compositionally biased stretch (basic and acidic residues) spans 43–63 (NGREVERHPLNSITKTEDTGK). Over residues 66–111 (QSSLSSNASSLQSAAAAASSSTATTDIDPLNNNNNNNTDIDPLNNP) the composition is skewed to low complexity.

Belongs to the VPS35L family. In terms of assembly, component of the heterotrimeric retriever complex.

The protein localises to the endosome. Functionally, acts as a component of the retriever complex. The retriever complex is a heterotrimeric complex related to retromer cargo-selective complex (CSC) and essential for retromer-independent retrieval and recycling of numerous cargos. This Dictyostelium discoideum (Social amoeba) protein is VPS35 endosomal protein sorting factor-like.